The following is a 156-amino-acid chain: Small ribosomal subunit protein uS7 (156 aa).

It belongs to the universal ribosomal protein uS7 family. Part of the 30S ribosomal subunit. Contacts proteins S9 and S11.

One of the primary rRNA binding proteins, it binds directly to 16S rRNA where it nucleates assembly of the head domain of the 30S subunit. Is located at the subunit interface close to the decoding center, probably blocks exit of the E-site tRNA. This chain is Small ribosomal subunit protein uS7, found in Shewanella loihica (strain ATCC BAA-1088 / PV-4).